Consider the following 385-residue polypeptide: 1-deoxy-D-xylulose 5-phosphate reductoisomerase (385 aa).

The NADPH site is built by Thr-10, Gly-11, Ser-12, Ile-13, Gly-36, Asn-38, and Asn-122. Lys-123 serves as a coordination point for 1-deoxy-D-xylulose 5-phosphate. Glu-124 serves as a coordination point for NADPH. Position 148 (Asp-148) interacts with Mn(2+). 1-deoxy-D-xylulose 5-phosphate contacts are provided by Ser-149, Glu-150, Ser-174, and His-197. Glu-150 serves as a coordination point for Mn(2+). Gly-203 serves as a coordination point for NADPH. Positions 210, 215, 216, and 219 each coordinate 1-deoxy-D-xylulose 5-phosphate. Position 219 (Glu-219) interacts with Mn(2+).

This sequence belongs to the DXR family. It depends on Mg(2+) as a cofactor. Mn(2+) serves as cofactor.

The enzyme catalyses 2-C-methyl-D-erythritol 4-phosphate + NADP(+) = 1-deoxy-D-xylulose 5-phosphate + NADPH + H(+). The protein operates within isoprenoid biosynthesis; isopentenyl diphosphate biosynthesis via DXP pathway; isopentenyl diphosphate from 1-deoxy-D-xylulose 5-phosphate: step 1/6. Its function is as follows. Catalyzes the NADPH-dependent rearrangement and reduction of 1-deoxy-D-xylulose-5-phosphate (DXP) to 2-C-methyl-D-erythritol 4-phosphate (MEP). The protein is 1-deoxy-D-xylulose 5-phosphate reductoisomerase of Geobacter sp. (strain M21).